We begin with the raw amino-acid sequence, 551 residues long: Cytochrome c oxidase subunit 1 homolog (551 aa).

3 consecutive transmembrane segments (helical) span residues 14–34 (GELG…VVAA), 40–60 (EYAF…FVIG), and 88–108 (VGTL…VIIA). H132 contacts heme b. A run of 8 helical transmembrane segments spans residues 133–153 (TSAV…FYVV), 169–189 (FVVL…LLGI), 202–222 (ADLW…GTVL), 229–249 (IYVA…LHLG), 280–300 (GHNA…YYFI), 313–333 (LSIV…PHHL), 345–365 (LGMT…INGL), and 383–403 (MMVV…MMSV). Positions 281, 331, and 332 each coordinate Cu cation. Residues H419 and H421 each contribute to the heme b site. A run of 3 helical transmembrane segments spans residues 424–444 (ALGW…PWLW), 459–479 (FWVS…AGIL), and 513–533 (IGGI…FMTI).

It belongs to the heme-copper respiratory oxidase family. It depends on Cu(2+) as a cofactor. Heme b is required as a cofactor.

It is found in the cell membrane. It carries out the reaction 4 Fe(II)-[cytochrome c] + O2 + 8 H(+)(in) = 4 Fe(III)-[cytochrome c] + 2 H2O + 4 H(+)(out). It functions in the pathway energy metabolism; oxidative phosphorylation. Its function is as follows. Cytochrome c oxidase is the component of the respiratory chain that catalyzes the reduction of oxygen to water. Subunits 1-3 form the functional core of the enzyme complex. Co I is the catalytic subunit of the enzyme. Electrons originating in cytochrome c or a quinol are transferred to the bimetallic center formed by a high-spin heme and copper B. The sequence is that of Cytochrome c oxidase subunit 1 homolog (fixN) from Azorhizobium caulinodans (strain ATCC 43989 / DSM 5975 / JCM 20966 / LMG 6465 / NBRC 14845 / NCIMB 13405 / ORS 571).